The primary structure comprises 332 residues: Protein FAM131B (332 aa).

Positions 1–22 (MDSTSSLHGSSLHRPSTEQTRT) are disordered. Residue Ser47 is modified to Phosphoserine. A disordered region spans residues 95 to 114 (PTIQPQHSHEAVRRDTDAYS). Positions 101 to 111 (HSHEAVRRDTD) are enriched in basic and acidic residues. Ser114 and Ser117 each carry phosphoserine. The interval 221 to 332 (LGPAFDDSQP…FDEEEGDANN (112 aa)) is disordered. Basic and acidic residues-rich tracts occupy residues 272 to 281 (PVEEEKRPLA) and 288 to 302 (AGCR…REDP). Phosphoserine occurs at positions 295, 297, and 313. Residue Thr316 is modified to Phosphothreonine. 3 positions are modified to phosphoserine: Ser317, Ser318, and Ser322. A compositionally biased stretch (acidic residues) spans 323–332 (FDEEEGDANN).

This sequence belongs to the FAM131 family.

The chain is Protein FAM131B (Fam131b) from Mus musculus (Mouse).